The chain runs to 257 residues: Indole-3-glycerol phosphate synthase (257 aa).

Belongs to the TrpC family.

It carries out the reaction 1-(2-carboxyphenylamino)-1-deoxy-D-ribulose 5-phosphate + H(+) = (1S,2R)-1-C-(indol-3-yl)glycerol 3-phosphate + CO2 + H2O. The protein operates within amino-acid biosynthesis; L-tryptophan biosynthesis; L-tryptophan from chorismate: step 4/5. In Phenylobacterium zucineum (strain HLK1), this protein is Indole-3-glycerol phosphate synthase.